The chain runs to 1273 residues: Kinesin-like protein KIN-7O (1273 aa).

Residues 3–327 (RIHVSVRARP…LQFASRALRV (325 aa)) form the Kinesin motor domain. 79 to 86 (GQTNSGKT) provides a ligand contact to ATP. A coiled-coil region spans residues 333–408 (VNEILTDAAL…QRERVLQEQA (76 aa)). The segment at 452 to 474 (SEDQSNVLSRGSSLESARSERET) is disordered. Residues 453-467 (EDQSNVLSRGSSLES) show a composition bias toward polar residues. 2 coiled-coil regions span residues 602–674 (EAIL…ESEV) and 751–1023 (VQSS…MEEE).

This sequence belongs to the TRAFAC class myosin-kinesin ATPase superfamily. Kinesin family. KIN-7 subfamily.

The chain is Kinesin-like protein KIN-7O from Arabidopsis thaliana (Mouse-ear cress).